The sequence spans 210 residues: Putative methyltransferase ECU09_1500 (210 aa).

Belongs to the methyltransferase superfamily.

This is Putative methyltransferase ECU09_1500 from Encephalitozoon cuniculi (strain GB-M1) (Microsporidian parasite).